The sequence spans 515 residues: Interferon-induced, double-stranded RNA-activated protein kinase (515 aa).

N-acetylalanine is present on A2. The DRBM 1 domain occupies 8 to 76 (FYMDKLNKYR…AKLAVDILDN (69 aa)). A Glycyl lysine isopeptide (Lys-Gly) (interchain with G-Cter in ISG15) cross-link involves residue K68. The residue at position 84 (T84) is a Phosphothreonine. The DRBM 2 domain occupies 95-162 (NYIGLVNSFA…AKEAYQKLLK (68 aa)). Phosphotyrosine; by autocatalysis is present on Y96. A Glycyl lysine isopeptide (Lys-Gly) (interchain with G-Cter in ISG15) cross-link involves residue K154. The residue at position 157 (Y157) is a Phosphotyrosine; by autocatalysis. The tract at residues 204–224 (ENVFTNGLGENKRKSGVKVSP) is disordered. T233 carries the phosphothreonine modification. The interval 241–515 (DFEDIEEIGL…ISEKKKRNTC (275 aa)) is interaction with TRAF5. Residues 242–504 (FEDIEEIGLG…EILKTLAEWR (263 aa)) form the Protein kinase domain. ATP is bound at residue 248-256 (IGLGGFGQV). Y268 carries the phosphotyrosine; by autocatalysis modification. An ATP-binding site is contributed by K271. Residue D376 is the Proton acceptor of the active site. Residues T409 and T414 each carry the phosphothreonine; by autocatalysis modification. At S419 the chain carries Phosphoserine.

Belongs to the protein kinase superfamily. Ser/Thr protein kinase family. GCN2 subfamily. Homodimer. Interacts with DNAJC3 and STRBP. Forms a complex with FANCA, FANCC, FANCG and HSP70. Interacts with ADAR/ADAR1. The inactive form interacts with NCK1. Interacts (via the kinase catalytic domain) with STAT3 (via SH2 domain), TRAF2 (C-terminus), TRAF5 (C-terminus) and TRAF6 (C-terminus). Interacts with MAP2K6, TARBP2, NLRP1, NLRC4 and AIM2. Interacts (via DRBM 1 domain) with DUS2L (via DRBM domain). Interacts with DHX9 (via N-terminus) and this interaction is dependent upon activation of the kinase. The inactive form interacts with GSN. Interacts with IKBKB/IKKB, NPM1, NLRP3 and IRS1. Autophosphorylated on several Ser, Thr and Tyr residues. Autophosphorylation of Thr-414 is dependent on Thr-409 and is stimulated by dsRNA binding and dimerization. Autophosphorylation apparently leads to the activation of the kinase. Tyrosine autophosphorylation is essential for efficient dsRNA-binding, dimerization, and kinase activation. As to expression, expressed in heart, lung, brain, kidney, testes, thymus and bone marrow.

It is found in the cytoplasm. Its subcellular location is the nucleus. It localises to the perinuclear region. The catalysed reaction is L-seryl-[protein] + ATP = O-phospho-L-seryl-[protein] + ADP + H(+). It carries out the reaction L-threonyl-[protein] + ATP = O-phospho-L-threonyl-[protein] + ADP + H(+). The enzyme catalyses L-tyrosyl-[protein] + ATP = O-phospho-L-tyrosyl-[protein] + ADP + H(+). Initially produced in an inactive form and is activated by binding to viral dsRNA, which causes dimerization and autophosphorylation in the activation loop and stimulation of function. ISGylation can activate it in the absence of viral infection. Can also be activated by heparin, pro-inflammatory stimuli, growth factors, cytokines, oxidative stress and the cellular protein PRKRA. Activity is markedly stimulated by manganese ions. Activation is blocked by the cellular proteins TARBP2, DUS2L, NPM1, NCK1 and ADAR. Its function is as follows. IFN-induced dsRNA-dependent serine/threonine-protein kinase that phosphorylates the alpha subunit of eukaryotic translation initiation factor 2 (EIF2S1/eIF-2-alpha) and plays a key role in the innate immune response to viral infection. Inhibits viral replication via the integrated stress response (ISR): EIF2S1/eIF-2-alpha phosphorylation in response to viral infection converts EIF2S1/eIF-2-alpha in a global protein synthesis inhibitor, resulting to a shutdown of cellular and viral protein synthesis, while concomitantly initiating the preferential translation of ISR-specific mRNAs, such as the transcriptional activator ATF4. Exerts its antiviral activity on a wide range of DNA and RNA viruses including west nile virus (WNV), sindbis virus (SV), foot-and-mouth virus (FMDV), semliki Forest virus (SFV) and lymphocytic choriomeningitis virus (LCMV). Also involved in the regulation of signal transduction, apoptosis, cell proliferation and differentiation: phosphorylates other substrates including p53/TP53, PPP2R5A, DHX9, ILF3, and IRS1. In addition to serine/threonine-protein kinase activity, also has tyrosine-protein kinase activity and phosphorylates CDK1 at 'Tyr-4' upon DNA damage, facilitating its ubiquitination and proteasomal degradation. Either as an adapter protein and/or via its kinase activity, can regulate various signaling pathways (p38 MAP kinase, NF-kappa-B and insulin signaling pathways) and transcription factors (JUN, STAT1, STAT3, IRF1, ATF3) involved in the expression of genes encoding pro-inflammatory cytokines and IFNs. Activates the NF-kappa-B pathway via interaction with IKBKB and TRAF family of proteins and activates the p38 MAP kinase pathway via interaction with MAP2K6. Can act as both a positive and negative regulator of the insulin signaling pathway (ISP). Negatively regulates ISP by inducing the inhibitory phosphorylation of insulin receptor substrate 1 (IRS1) at 'Ser-312' and positively regulates ISP via phosphorylation of PPP2R5A which activates FOXO1, which in turn up-regulates the expression of insulin receptor substrate 2 (IRS2). Can regulate NLRP3 inflammasome assembly and the activation of NLRP3, NLRP1, AIM2 and NLRC4 inflammasomes. Plays a role in the regulation of the cytoskeleton by binding to gelsolin (GSN), sequestering the protein in an inactive conformation away from actin. This is Interferon-induced, double-stranded RNA-activated protein kinase (Eif2ak2) from Mus musculus (Mouse).